Here is a 1265-residue protein sequence, read N- to C-terminus: Protein diaphanous homolog 1 (1265 aa).

Met-1 carries the post-translational modification N-acetylmethionine. Residues 1–12 are compositionally biased toward gly residues; sequence MEPSGGGLGPGR. 2 disordered regions span residues 1 to 42 and 54 to 83; these read MEPS…FTLK and SMRI…TAQS. Ser-22 is subject to Phosphoserine. Residues 54–65 are compositionally biased toward basic and acidic residues; sequence SMRIKKEKEKPN. Polar residues predominate over residues 67–83; that stretch reads AHRNSSASYGDDPTAQS. The 366-residue stretch at 84–449 folds into the GBD/FH3 domain; sequence LQDISDDQVL…QIVLHKNGTD (366 aa). Residues 474-568 are a coiled coil; sequence VEKSEAKATE…KKEMASLSAV (95 aa). The disordered stretch occupies residues 573-742; that stretch reads SVSSSAAVPQ…PPPPGMGVPP (170 aa). 2 stretches are compositionally biased toward pro residues: residues 594 to 628 and 645 to 742; these read IPPP…PPLP and IPPP…GVPP. The 133-residue stretch at 625–757 folds into the FH1 domain; that stretch reads PPLPGGACIS…FGIPAAPVLP (133 aa). Thr-761 bears the Phosphothreonine mark. Residues 762–1164 enclose the FH2 domain; it reads PKKVYKPEVQ…MRRAKLAKEK (403 aa). Residues Lys-1050 and Lys-1096 each carry the N6-acetyllysine modification. Tyr-1114 is subject to Phosphotyrosine. The stretch at 1141-1185 forms a coiled coil; sequence AVKENQKRRETEEKMRRAKLAKEKAEKERLEKQQKREQLIDMNAE. A DAD domain is found at 1187-1215; it reads DETGVMDSLLEALQSGAAFRRKRGPRQVN. Ser-1247 carries the post-translational modification Phosphoserine.

It belongs to the formin homology family. Diaphanous subfamily. Homodimer. Interacts with the GTP-bound form of RHOA. Interacts with RHOC, PFY1, MAPRE1, BAIAP2 and APC. Interacts with SCAI. Interacts with DCAF7, via FH2 domain. Interacts with NCDN. Interacts with OSBPL10, OSBPL2, VIM, TUBB and DYN1. Post-translationally, phosphorylation at Thr-761 is stimulated by cAMP and regulates stability, complex formation and mitochondrial movement. In terms of tissue distribution, expressed in testis. Present in Sertoli cells (at protein level).

It is found in the cell membrane. It localises to the cell projection. The protein localises to the ruffle membrane. Its subcellular location is the cytoplasm. The protein resides in the cytoskeleton. It is found in the microtubule organizing center. It localises to the centrosome. The protein localises to the spindle. Its subcellular location is the nucleus. Functionally, actin nucleation and elongation factor required for the assembly of F-actin structures, such as actin cables and stress fibers. Binds to the barbed end of the actin filament and slows down actin polymerization and depolymerization. Required for cytokinesis, and transcriptional activation of the serum response factor. DFR proteins couple Rho and Src tyrosine kinase during signaling and the regulation of actin dynamics. Functions as a scaffold protein for MAPRE1 and APC to stabilize microtubules and promote cell migration. Has neurite outgrowth promoting activity. Acts in a Rho-dependent manner to recruit PFY1 to the membrane. The MEMO1-RHOA-DIAPH1 signaling pathway plays an important role in ERBB2-dependent stabilization of microtubules at the cell cortex. It controls the localization of APC and CLASP2 to the cell membrane, via the regulation of GSK3B activity. In turn, membrane-bound APC allows the localization of the MACF1 to the cell membrane, which is required for microtubule capture and stabilization. Plays a role in the regulation of cell morphology and cytoskeletal organization. Required in the control of cell shape. Also acts as an actin nucleation and elongation factor in the nucleus by promoting nuclear actin polymerization inside the nucleus to drive serum-dependent SRF-MRTFA activity. The protein is Protein diaphanous homolog 1 of Rattus norvegicus (Rat).